A 217-amino-acid polypeptide reads, in one-letter code: MPVIGEKFPEVEVKTTHGAIKLPDYYVEKGKWFVLFSHPADFTPVCTTEFVGFQKRYDEFRKLNTELIGLSIDQVFSHLKWVEWIKEKLNVEIEFPIIADDRGELAEKLGMISPYKGNNTVRAVFVVDNKGIIRAIIYYPQEVGRNLDEIVRLVKALQVSDEKGVAMPANWPENDLIGDKVIIPPASSVEEIKQRKEACEKGEIECLDWWFCYKKLD.

One can recognise a Thioredoxin domain in the interval 2-159 (PVIGEKFPEV…IVRLVKALQV (158 aa)). Cysteine 46 acts as the Cysteine sulfenic acid (-SOH) intermediate in catalysis. Substrate is bound at residue arginine 122. An intrachain disulfide couples cysteine 206 to cysteine 212.

Belongs to the peroxiredoxin family. Prx6 subfamily. As to quaternary structure, homodecamer. Pentamer of dimers that assemble into a ring structure.

It is found in the cytoplasm. The enzyme catalyses a hydroperoxide + [thioredoxin]-dithiol = an alcohol + [thioredoxin]-disulfide + H2O. Thiol-specific peroxidase that catalyzes the reduction of hydrogen peroxide and organic hydroperoxides to water and alcohols, respectively. Plays a role in cell protection against oxidative stress by detoxifying peroxides. The protein is Peroxiredoxin of Methanocaldococcus jannaschii (strain ATCC 43067 / DSM 2661 / JAL-1 / JCM 10045 / NBRC 100440) (Methanococcus jannaschii).